We begin with the raw amino-acid sequence, 425 residues long: 1,4-beta-D-glucan glucohydrolase (425 aa).

The Proton donor role is filled by Glu164. Glu349 serves as the catalytic Nucleophile.

The protein belongs to the glycosyl hydrolase 1 family. In terms of assembly, monomer.

It catalyses the reaction Hydrolysis of (1-&gt;4)-linkages in (1-&gt;4)-beta-D-glucans, to remove successive glucose units.. It carries out the reaction Hydrolysis of terminal, non-reducing beta-D-glucosyl residues with release of beta-D-glucose.. Its pathway is glycan metabolism; cellulose degradation. The protein operates within glycan metabolism; beta-D-glucan degradation. Functionally, broad substrate specificity glycosidase. Releases glucose from soluble glucooligomers, with a preference for longer oligomers; acts more readily on cellotetraose than on cellobiose. Displays similar activities towards the disaccharides lactose and cellobiose. Is also able to hydrolyze various aryl-beta-glycosides in vitro. In Thermotoga neapolitana, this protein is 1,4-beta-D-glucan glucohydrolase (bglA).